Here is a 276-residue protein sequence, read N- to C-terminus: Pantothenate synthetase (276 aa).

27-34 (MGALHRGH) serves as a coordination point for ATP. The active-site Proton donor is the histidine 34. Position 58 (glutamine 58) interacts with (R)-pantoate. Glutamine 58 is a binding site for beta-alanine. ATP is bound at residue 147–150 (GKKD). Position 153 (glutamine 153) interacts with (R)-pantoate. ATP contacts are provided by residues valine 176 and 184–187 (LSSR).

The protein belongs to the pantothenate synthetase family. In terms of assembly, homodimer.

It localises to the cytoplasm. The enzyme catalyses (R)-pantoate + beta-alanine + ATP = (R)-pantothenate + AMP + diphosphate + H(+). The protein operates within cofactor biosynthesis; (R)-pantothenate biosynthesis; (R)-pantothenate from (R)-pantoate and beta-alanine: step 1/1. In terms of biological role, catalyzes the condensation of pantoate with beta-alanine in an ATP-dependent reaction via a pantoyl-adenylate intermediate. The chain is Pantothenate synthetase from Helicobacter pylori (strain J99 / ATCC 700824) (Campylobacter pylori J99).